The sequence spans 699 residues: eEF1A lysine and N-terminal methyltransferase (699 aa).

At Met1 the chain carries N-acetylmethionine. Ser267 carries the post-translational modification Phosphoserine. The disordered stretch occupies residues 433–459 (VSHKAQKKRKKDRKKQRPADAEDLPAA). Over residues 436-448 (KAQKKRKKDRKKQ) the composition is skewed to basic residues.

It belongs to the methyltransferase superfamily. In terms of assembly, forms a tripartite complex containing GAB1, METTL13 and SPRY2. Within the complex interacts with GAB1 and SPRY2.

The protein localises to the cytoplasm. The protein resides in the nucleus. It is found in the mitochondrion. It catalyses the reaction L-lysyl-[protein] + S-adenosyl-L-methionine = N(6)-methyl-L-lysyl-[protein] + S-adenosyl-L-homocysteine + H(+). The enzyme catalyses N(6)-methyl-L-lysyl-[protein] + S-adenosyl-L-methionine = N(6),N(6)-dimethyl-L-lysyl-[protein] + S-adenosyl-L-homocysteine + H(+). It carries out the reaction N-terminal glycyl-L-lysyl-L-glutamyl-[protein] + 3 S-adenosyl-L-methionine = N-terminal N,N,N-trimethyl-glycyl-L-lysyl-L-glutamyl-[protein] + 3 S-adenosyl-L-homocysteine + 3 H(+). Protein N-terminal methyltransferase activity is inhibited by GTP and GDP. Dual methyltransferase that catalyzes methylation of elongation factor 1-alpha (EEF1A1 and EEF1A2) at two different positions, and is therefore involved in the regulation of mRNA translation. Via its C-terminus, methylates EEF1A1 and EEF1A2 at the N-terminal residue 'Gly-2'. Via its N-terminus dimethylates EEF1A1 and EEF1A2 at residue 'Lys-55'. Has no activity towards core histones H2A, H2B, H3 and H4. This chain is eEF1A lysine and N-terminal methyltransferase, found in Homo sapiens (Human).